We begin with the raw amino-acid sequence, 130 residues long: MSATQNYGTGRRKTATARVFLRPGTGNISINNRTLDNFFGRETARMVVRQPLELTETVEKFDIYVTVIGGGVSGQAGAIRHGITRALMQYDETLRGALRKAGFVTRDAREVERKKVGLRKARKRPQYSKR.

It belongs to the universal ribosomal protein uS9 family.

The polypeptide is Small ribosomal subunit protein uS9 (Pseudomonas fluorescens (strain SBW25)).